Here is a 333-residue protein sequence, read N- to C-terminus: CMP-N-acetylneuraminate-beta-galactosamide-alpha-2,3-sialyltransferase 4 (333 aa).

Residues 1-8 (MVSKSRWK) lie on the Cytoplasmic side of the membrane. The helical; Signal-anchor for type II membrane protein transmembrane segment at 9-26 (LLAMLALVLVVMVWYSIS) threads the bilayer. The Lumenal segment spans residues 27-333 (REDRYIELFY…MGAIKNLTSF (307 aa)). Residues Asn61, Asn131, Asn310, and Asn329 are each glycosylated (N-linked (GlcNAc...) asparagine). Cys120 and Cys273 are joined by a disulfide.

The protein belongs to the glycosyltransferase 29 family. Post-translationally, the soluble form derives from the membrane form by proteolytic processing. As to expression, highly expressed in adult placenta, heart and kidney.

Its subcellular location is the golgi apparatus. The protein resides in the golgi stack membrane. It localises to the secreted. The catalysed reaction is a beta-D-galactosyl-(1-&gt;3)-N-acetyl-beta-D-galactosaminyl derivative + CMP-N-acetyl-beta-neuraminate = an N-acetyl-alpha-neuraminyl-(2-&gt;3)-beta-D-galactosyl-(1-&gt;3)-N-acetyl-beta-D-galactosaminyl derivative + CMP + H(+). It catalyses the reaction a beta-D-galactosyl-(1-&gt;3)-N-acetyl-alpha-D-galactosaminyl derivative + CMP-N-acetyl-beta-neuraminate = an N-acetyl-alpha-neuraminyl-(2-&gt;3)-beta-D-galactosyl-(1-&gt;3)-N-acetyl-alpha-D-galactosaminyl derivative + CMP + H(+). The enzyme catalyses a beta-D-galactosyl-(1-&gt;4)-N-acetyl-beta-D-glucosaminyl derivative + CMP-N-acetyl-beta-neuraminate = an N-acetyl-alpha-neuraminyl-(2-&gt;3)-beta-D-galactosyl-(1-&gt;4)-N-acetyl-beta-D-glucosaminyl derivative + CMP + H(+). It carries out the reaction a ganglioside GM1 (d18:1(4E)) + CMP-N-acetyl-beta-neuraminate = a ganglioside GD1a (d18:1(4E)) + CMP + H(+). The catalysed reaction is a ganglioside GA1 (d18:1(4E)) + CMP-N-acetyl-beta-neuraminate = a ganglioside GM1b (d18:1(4E)) + CMP + H(+). It catalyses the reaction a ganglioside GT1c (d18:1(4E)) + CMP-N-acetyl-beta-neuraminate = a ganglioside GQ1c (d18:1(4E)) + CMP + H(+). The enzyme catalyses a neolactoside nLc4Cer + CMP-N-acetyl-beta-neuraminate = a neolactoside IV(3)-alpha-NeuAc-nLc4Cer + CMP + H(+). It carries out the reaction a neolactoside nLc4Cer(d18:1(4E)) + CMP-N-acetyl-beta-neuraminate = a neolactoside IV(3)-alpha-NeuAc-nLc4Cer(d18:1(4E)) + CMP + H(+). It participates in protein modification; protein glycosylation. Its pathway is glycolipid biosynthesis. Its function is as follows. A beta-galactoside alpha2-3 sialyltransferase involved in terminal sialylation of glycoproteins and glycolipids. Catalyzes the transfer of sialic acid (N-acetyl-neuraminic acid; Neu5Ac) from the nucleotide sugar donor CMP-Neu5Ac onto acceptor Galbeta-(1-&gt;3)-GalNAc- and Galbeta-(1-&gt;4)-GlcNAc-terminated glycoconjugates through an alpha2-3 linkage. Plays a major role in hemostasis. Responsible for sialylation of plasma VWF/von Willebrand factor, preventing its recognition by asialoglycoprotein receptors (ASGPR) and subsequent clearance. Regulates ASGPR-mediated clearance of platelets. Participates in the biosynthesis of the sialyl Lewis X epitopes, both on O- and N-glycans, which are recognized by SELE/E-selectin, SELP/P-selectin and SELL/L-selectin. Essential for selectin-mediated rolling and adhesion of leukocytes during extravasation. Contributes to adhesion and transendothelial migration of neutrophils likely through terminal sialylation of CXCR2. In glycosphingolipid biosynthesis, sialylates GM1 and GA1 gangliosides to form GD1a and GM1b, respectively. Metabolizes brain c-series ganglioside GT1c forming GQ1c. Synthesizes ganglioside LM1 (IV3Neu5Ac-nLc4Cer), a major structural component of peripheral nerve myelin. In Homo sapiens (Human), this protein is CMP-N-acetylneuraminate-beta-galactosamide-alpha-2,3-sialyltransferase 4 (ST3GAL4).